An 85-amino-acid chain; its full sequence is Small ribosomal subunit protein bS16 (85 aa).

It belongs to the bacterial ribosomal protein bS16 family.

The protein is Small ribosomal subunit protein bS16 of Pseudomonas savastanoi pv. phaseolicola (strain 1448A / Race 6) (Pseudomonas syringae pv. phaseolicola (strain 1448A / Race 6)).